Reading from the N-terminus, the 240-residue chain is Methylthioribulose-1-phosphate dehydratase (240 aa).

C100 contacts substrate. Zn(2+) is bound by residues H117 and H119. Catalysis depends on E146, which acts as the Proton donor/acceptor. H202 contacts Zn(2+).

The protein belongs to the aldolase class II family. MtnB subfamily. Zn(2+) serves as cofactor.

The protein localises to the cytoplasm. It catalyses the reaction 5-(methylsulfanyl)-D-ribulose 1-phosphate = 5-methylsulfanyl-2,3-dioxopentyl phosphate + H2O. The protein operates within amino-acid biosynthesis; L-methionine biosynthesis via salvage pathway; L-methionine from S-methyl-5-thio-alpha-D-ribose 1-phosphate: step 2/6. Its function is as follows. Catalyzes the dehydration of methylthioribulose-1-phosphate (MTRu-1-P) into 2,3-diketo-5-methylthiopentyl-1-phosphate (DK-MTP-1-P). The protein is Methylthioribulose-1-phosphate dehydratase of Emericella nidulans (strain FGSC A4 / ATCC 38163 / CBS 112.46 / NRRL 194 / M139) (Aspergillus nidulans).